A 430-amino-acid polypeptide reads, in one-letter code: Serine--tRNA ligase (430 aa).

237-239 (TAE) is a binding site for L-serine. 268–270 (RSE) provides a ligand contact to ATP. Glutamate 291 contributes to the L-serine binding site. 355–358 (EISS) contacts ATP. An L-serine-binding site is contributed by serine 391.

The protein belongs to the class-II aminoacyl-tRNA synthetase family. Type-1 seryl-tRNA synthetase subfamily. Homodimer. The tRNA molecule binds across the dimer.

The protein localises to the cytoplasm. It catalyses the reaction tRNA(Ser) + L-serine + ATP = L-seryl-tRNA(Ser) + AMP + diphosphate + H(+). It carries out the reaction tRNA(Sec) + L-serine + ATP = L-seryl-tRNA(Sec) + AMP + diphosphate + H(+). It functions in the pathway aminoacyl-tRNA biosynthesis; selenocysteinyl-tRNA(Sec) biosynthesis; L-seryl-tRNA(Sec) from L-serine and tRNA(Sec): step 1/1. In terms of biological role, catalyzes the attachment of serine to tRNA(Ser). Is also able to aminoacylate tRNA(Sec) with serine, to form the misacylated tRNA L-seryl-tRNA(Sec), which will be further converted into selenocysteinyl-tRNA(Sec). This is Serine--tRNA ligase from Yersinia enterocolitica serotype O:8 / biotype 1B (strain NCTC 13174 / 8081).